Reading from the N-terminus, the 257-residue chain is Transcription factor GHD7 (257 aa).

Serine 68 carries the post-translational modification Phosphoserine; by CK1. Residues 190–232 (REAKLMRYKEKRKKRCYEKQIRYASRKAYAEMRPRVRGRFAKE) form the CCT domain. Residues 198–204 (KEKRKKR) carry the Nuclear localization signal motif. Residues 226-245 (RGRFAKEPDQEAVAPPSTYV) are disordered.

As to quaternary structure, interacts with HD16/EL1. Post-translationally, phosphorylated at Ser-68 by HD16/EL1, a casein kinase 1. As to expression, expressed in the apical meristem, developing leaves, leaf sheaths of young seedling, root meristem, epidermal layer of developing stems and branch-primordia of developing panicles.

The protein resides in the nucleus. Functionally, probable transcription factor involved in the regulation of flowering time under long day (LD) conditions. Plays a major role as repressor of flowering. Controls flowering time by negatively regulating the expression of EHD1 and HD3A. This is Transcription factor GHD7 from Oryza sativa subsp. japonica (Rice).